Reading from the N-terminus, the 112-residue chain is Protein GAST1 (112 aa).

Positions 1-25 are cleaved as a signal peptide; it reads MAGKMSIVLFVLLVVFLTQNQVSRA.

This sequence belongs to the GASA family. In terms of processing, six disulfide bonds may be present. As to expression, all shoot organs.

It localises to the secreted. This chain is Protein GAST1 (GAST1), found in Solanum lycopersicum (Tomato).